A 175-amino-acid chain; its full sequence is Small ribosomal subunit protein uS5 (175 aa).

The tract at residues 1–21 (MAKPERNKKPQQAEERDDGMR) is disordered. The S5 DRBM domain maps to 20–83 (MREKMVAVNR…EEARRKMAKV (64 aa)).

Belongs to the universal ribosomal protein uS5 family. As to quaternary structure, part of the 30S ribosomal subunit. Contacts proteins S4 and S8.

Its function is as follows. With S4 and S12 plays an important role in translational accuracy. In terms of biological role, located at the back of the 30S subunit body where it stabilizes the conformation of the head with respect to the body. This Dechloromonas aromatica (strain RCB) protein is Small ribosomal subunit protein uS5.